Reading from the N-terminus, the 32-residue chain is Photosystem II reaction center protein T (32 aa).

The chain crosses the membrane as a helical span at residues 3-23 (ALVYTFLLIGTLIVIFFAVFF).

This sequence belongs to the PsbT family. As to quaternary structure, PSII is composed of 1 copy each of membrane proteins PsbA, PsbB, PsbC, PsbD, PsbE, PsbF, PsbH, PsbI, PsbJ, PsbK, PsbL, PsbM, PsbT, PsbX, PsbY, PsbZ, Psb30/Ycf12, at least 3 peripheral proteins of the oxygen-evolving complex and a large number of cofactors. It forms dimeric complexes.

The protein resides in the plastid. The protein localises to the chloroplast thylakoid membrane. Its function is as follows. Found at the monomer-monomer interface of the photosystem II (PS II) dimer, plays a role in assembly and dimerization of PSII. PSII is a light-driven water plastoquinone oxidoreductase, using light energy to abstract electrons from H(2)O, generating a proton gradient subsequently used for ATP formation. This chain is Photosystem II reaction center protein T, found in Phaeodactylum tricornutum (strain CCAP 1055/1).